The following is a 67-amino-acid chain: MVRVPKNNNENQSKAVVRTYYEVEQDSIKLKNKKCPRCGSIMAHHMKPLERWACGKCGYTEFIGKSR.

Positions 35, 38, 54, and 57 each coordinate Zn(2+). A C4-type zinc finger spans residues C35–C57.

It belongs to the eukaryotic ribosomal protein eS31 family. As to quaternary structure, part of the 30S ribosomal subunit. The cofactor is Zn(2+).

The chain is Small ribosomal subunit protein eS31 from Sulfolobus acidocaldarius (strain ATCC 33909 / DSM 639 / JCM 8929 / NBRC 15157 / NCIMB 11770).